The sequence spans 286 residues: 3-hydroxyanthranilate 3,4-dioxygenase (286 aa).

Residues 1 to 160 (MERPVRVKAW…SEQYRTGKPN (160 aa)) form a domain A (catalytic) region. Arginine 43 contacts O2. Fe cation contacts are provided by histidine 47, glutamate 53, and histidine 91. Residue glutamate 53 coordinates substrate. Substrate is bound by residues arginine 95 and glutamate 105. Positions 161–177 (PDQLLKEPPFPLSTRSV) are linker. Residues 178 to 286 (MEPMCLEAWL…QDPACKKSLG (109 aa)) are domain B.

This sequence belongs to the 3-HAO family. Monomer. It depends on Fe(2+) as a cofactor.

Its subcellular location is the cytoplasm. The protein localises to the cytosol. The catalysed reaction is 3-hydroxyanthranilate + O2 = (2Z,4Z)-2-amino-3-carboxymuconate 6-semialdehyde. It functions in the pathway cofactor biosynthesis; NAD(+) biosynthesis; quinolinate from L-kynurenine: step 3/3. In terms of biological role, catalyzes the oxidative ring opening of 3-hydroxyanthranilate to 2-amino-3-carboxymuconate semialdehyde, which spontaneously cyclizes to quinolinate. In Bos taurus (Bovine), this protein is 3-hydroxyanthranilate 3,4-dioxygenase.